A 148-amino-acid chain; its full sequence is SsrA-binding protein (148 aa).

The segment at lysine 123–threonine 148 is disordered. Over residues aspartate 126–arginine 142 the composition is skewed to basic and acidic residues.

Belongs to the SmpB family.

It localises to the cytoplasm. Required for rescue of stalled ribosomes mediated by trans-translation. Binds to transfer-messenger RNA (tmRNA), required for stable association of tmRNA with ribosomes. tmRNA and SmpB together mimic tRNA shape, replacing the anticodon stem-loop with SmpB. tmRNA is encoded by the ssrA gene; the 2 termini fold to resemble tRNA(Ala) and it encodes a 'tag peptide', a short internal open reading frame. During trans-translation Ala-aminoacylated tmRNA acts like a tRNA, entering the A-site of stalled ribosomes, displacing the stalled mRNA. The ribosome then switches to translate the ORF on the tmRNA; the nascent peptide is terminated with the 'tag peptide' encoded by the tmRNA and targeted for degradation. The ribosome is freed to recommence translation, which seems to be the essential function of trans-translation. This is SsrA-binding protein from Burkholderia pseudomallei (strain 1710b).